Here is a 107-residue protein sequence, read N- to C-terminus: Protein phosphatase 1 regulatory subunit INH3 (107 aa).

Residues 1-14 (MSTATRPSSSATTS) are compositionally biased toward low complexity. Disordered regions lie at residues 1–40 (MSTA…KKKK) and 69–107 (PFDE…KAVD). Over residues 71–80 (DEDDSEEEDD) the composition is skewed to acidic residues. Residues 81 to 94 (NNHHCDHNHEHSES) show a composition bias toward basic and acidic residues. Over residues 95–107 (GEASSSNDSKAVD) the composition is skewed to low complexity.

In terms of assembly, interacts with protein phosphatase 1. In terms of tissue distribution, expressed in roots, cotyledons, leaves, flowers and embryos.

Inhibitor of protein-phosphatase 1 (PP1). Binds to and inhibits PP1 activity. Required for early embryogenesis progression. The polypeptide is Protein phosphatase 1 regulatory subunit INH3 (Arabidopsis thaliana (Mouse-ear cress)).